Reading from the N-terminus, the 578-residue chain is Membrane protein insertase YidC (578 aa).

Residues 3-23 (IQRSILIVALAVVSYLLVLQW) traverse the membrane as a helical segment. Residues 34-72 (AASASMNTTQGLPDTPSASGTSSDVPTAQSSAAGSEAAD) form a disordered region. Residues 37 to 66 (ASMNTTQGLPDTPSASGTSSDVPTAQSSAA) show a composition bias toward polar residues. The next 5 helical transmembrane spans lie at 361-381 (LELT…FWLL), 387-407 (LIGN…LAFF), 457-477 (LGGC…YWVL), 500-520 (PFFI…MLNP), and 535-555 (PIIF…YWVV).

It belongs to the OXA1/ALB3/YidC family. Type 1 subfamily. In terms of assembly, interacts with the Sec translocase complex via SecD. Specifically interacts with transmembrane segments of nascent integral membrane proteins during membrane integration.

The protein localises to the cell inner membrane. In terms of biological role, required for the insertion and/or proper folding and/or complex formation of integral membrane proteins into the membrane. Involved in integration of membrane proteins that insert both dependently and independently of the Sec translocase complex, as well as at least some lipoproteins. Aids folding of multispanning membrane proteins. In Pseudomonas aeruginosa (strain LESB58), this protein is Membrane protein insertase YidC.